Consider the following 199-residue polypeptide: Charged multivesicular body protein 1b (199 aa).

Coiled coils occupy residues 10 to 48 (NLKFAAKELNRNSKRCDKEEKAEKAKIKKAIQKGNMEVA) and 178 to 199 (TSVASAEQDELSQRLARLRDQV). The disordered stretch occupies residues 167-199 (ELPQGQTGSVGTSVASAEQDELSQRLARLRDQV). The segment covering 170-182 (QGQTGSVGTSVAS) has biased composition (polar residues). The MIT-interacting motif motif lies at 186-196 (DELSQRLARLR).

This sequence belongs to the SNF7 family. In terms of assembly, probable peripherally associated component of the endosomal sorting required for transport complex III (ESCRT-III).

The protein localises to the cytoplasm. It localises to the cytosol. Its subcellular location is the endosome. It is found in the late endosome membrane. In terms of biological role, probable peripherally associated component of the endosomal sorting required for transport complex III (ESCRT-III) which is involved in multivesicular bodies (MVBs) formation and sorting of endosomal cargo proteins into MVBs. MVBs contain intraluminal vesicles (ILVs) that are generated by invagination and scission from the limiting membrane of the endosome and mostly are delivered to lysosomes enabling degradation of membrane proteins, such as stimulated growth factor receptors, lysosomal enzymes and lipids. The polypeptide is Charged multivesicular body protein 1b (CHMP1B) (Gallus gallus (Chicken)).